The primary structure comprises 136 residues: Histone H2A (136 aa).

The segment covering 1–11 (MSSGGKSGGKA) has biased composition (gly residues). The disordered stretch occupies residues 1–24 (MSSGGKSGGKAGDASSKAQSRSAK). N6-acetyllysine occurs at positions 6 and 10. Over residues 12-24 (GDASSKAQSRSAK) the composition is skewed to low complexity. At Gln108 the chain carries N5-methylglutamine. Ser133 is subject to Phosphoserine. Positions 133–134 (SQ) match the [ST]-Q motif motif.

This sequence belongs to the histone H2A family. In terms of assembly, the nucleosome is a histone octamer containing two molecules each of H2A, H2B, H3 and H4 assembled in one H3-H4 heterotetramer and two H2A-H2B heterodimers. The octamer wraps approximately 147 bp of DNA. Post-translationally, phosphorylated to form H2AS128ph (gamma-H2A) in response to DNA double-strand breaks (DSBs) generated by exogenous genotoxic agents and by stalled replication forks. Phosphorylation is dependent on the DNA damage checkpoint kinases MEC1/ATR and TEL1/ATM, spreads on either side of a detected DSB site and may mark the surrounding chromatin for recruitment of proteins required for DNA damage signaling and repair. Gamma-H2A is removed from the DNA prior to the strand invasion-primer extension step of the repair process and subsequently dephosphorylated. Dephosphorylation is necessary for efficient recovery from the DNA damage checkpoint. Acetylated by ESA1 to form H2AK4ac and H2AK7ac.

It is found in the nucleus. The protein resides in the chromosome. Functionally, core component of nucleosome which plays a central role in DNA double strand break (DSB) repair. Nucleosomes wrap and compact DNA into chromatin, limiting DNA accessibility to the cellular machineries which require DNA as a template. Histones thereby play a central role in transcription regulation, DNA repair, DNA replication and chromosomal stability. DNA accessibility is regulated via a complex set of post-translational modifications of histones, also called histone code, and nucleosome remodeling. The polypeptide is Histone H2A (HTA1) (Mycosarcoma maydis (Corn smut fungus)).